The following is a 315-amino-acid chain: Calumenin (315 aa).

Positions 1-19 (MDLRQFLMCLSLCTAFALS) are cleaved as a signal peptide. Phosphoserine is present on Ser44. Position 47 is a phosphotyrosine (Tyr47). A Phosphothreonine modification is found at Thr65. 6 consecutive EF-hand domains span residues 68-103 (ESKE…AQKK), 104-139 (YIYD…TYLD), 151-186 (QMMV…EEYD), 188-223 (MKDI…HDGN), 229-264 (WVKT…SDYD), and 265-300 (HAEA…FVGS). Position 69 is a phosphoserine (Ser69). 8 residues coordinate Ca(2+): Asp81, Asp83, Asp85, Glu92, Asp117, Asn119, Asp121, and Glu128. The N-linked (GlcNAc...) asparagine glycan is linked to Asn131. Asp164 contributes to the Ca(2+) binding site. N6-acetyllysine is present on Lys165. Ca(2+) is bound by residues Asp166, Asp168, Glu175, Asp201, Asn203, Asp205, Glu212, Asp242, Asn244, Asp246, Lys248, and Glu253. Thr254 carries the post-translational modification Phosphothreonine. A phosphoserine mark is found at Ser261 and Ser277. Ca(2+) contacts are provided by Asp278, Asn280, Asp282, Lys284, and Glu289. The Prevents secretion from ER signature appears at 312–315 (HDEF).

It belongs to the CREC family. As to quaternary structure, interacts with GGCX.

The protein resides in the endoplasmic reticulum membrane. It localises to the golgi apparatus. It is found in the secreted. Its subcellular location is the melanosome. The protein localises to the sarcoplasmic reticulum lumen. In terms of biological role, involved in regulation of vitamin K-dependent carboxylation of multiple N-terminal glutamate residues. Seems to inhibit gamma-carboxylase GGCX. Binds 7 calcium ions with a low affinity. This Bos taurus (Bovine) protein is Calumenin (CALU).